Reading from the N-terminus, the 178-residue chain is tRNA (cytidine(56)-2'-O)-methyltransferase (178 aa).

S-adenosyl-L-methionine contacts are provided by residues Leu-84, 109–113 (GAEKV), and 127–134 (IGNQPHSE).

The protein belongs to the aTrm56 family. Homodimer.

The protein localises to the cytoplasm. It carries out the reaction cytidine(56) in tRNA + S-adenosyl-L-methionine = 2'-O-methylcytidine(56) in tRNA + S-adenosyl-L-homocysteine + H(+). In terms of biological role, specifically catalyzes the AdoMet-dependent 2'-O-ribose methylation of cytidine at position 56 in tRNAs. In Methanococcoides burtonii (strain DSM 6242 / NBRC 107633 / OCM 468 / ACE-M), this protein is tRNA (cytidine(56)-2'-O)-methyltransferase.